A 211-amino-acid polypeptide reads, in one-letter code: Holliday junction resolvase RecU (211 aa).

Mg(2+)-binding residues include Thr87, Asp89, Asp102, and Gln121.

Belongs to the RecU family. Requires Mg(2+) as cofactor.

It is found in the cytoplasm. The enzyme catalyses Endonucleolytic cleavage at a junction such as a reciprocal single-stranded crossover between two homologous DNA duplexes (Holliday junction).. Functionally, endonuclease that resolves Holliday junction intermediates in genetic recombination. Cleaves mobile four-strand junctions by introducing symmetrical nicks in paired strands. Promotes annealing of linear ssDNA with homologous dsDNA. Required for DNA repair, homologous recombination and chromosome segregation. The sequence is that of Holliday junction resolvase RecU from Limosilactobacillus fermentum (strain NBRC 3956 / LMG 18251) (Lactobacillus fermentum).